The sequence spans 351 residues: Histidinol-phosphate aminotransferase (351 aa).

Lysine 221 is subject to N6-(pyridoxal phosphate)lysine.

It belongs to the class-II pyridoxal-phosphate-dependent aminotransferase family. Histidinol-phosphate aminotransferase subfamily. As to quaternary structure, homodimer. Requires pyridoxal 5'-phosphate as cofactor.

The catalysed reaction is L-histidinol phosphate + 2-oxoglutarate = 3-(imidazol-4-yl)-2-oxopropyl phosphate + L-glutamate. Its pathway is amino-acid biosynthesis; L-histidine biosynthesis; L-histidine from 5-phospho-alpha-D-ribose 1-diphosphate: step 7/9. The protein is Histidinol-phosphate aminotransferase of Staphylococcus saprophyticus subsp. saprophyticus (strain ATCC 15305 / DSM 20229 / NCIMB 8711 / NCTC 7292 / S-41).